A 216-amino-acid polypeptide reads, in one-letter code: MOB kinase activator 3B (216 aa).

4 residues coordinate Zn(2+): C82, C87, H164, and H169.

It belongs to the MOB1/phocein family.

Functionally, modulates LATS1 expression in the Hippo signaling pathway which plays a pivotal role in organ size control and tumor suppression by restricting proliferation and promoting apoptosis. The protein is MOB kinase activator 3B of Homo sapiens (Human).